A 373-amino-acid polypeptide reads, in one-letter code: Ubiquitin domain-containing protein DSK2 (373 aa).

Residues 1–76 enclose the Ubiquitin-like domain; the sequence is MSLNIHIKSG…SVHLVKSQPK (76 aa). Residues Lys13 and Lys76 each participate in a glycyl lysine isopeptide (Lys-Gly) (interchain with G-Cter in ubiquitin) cross-link. Residues 221 to 270 form a disordered region; it reads DPNAGMGSAGGAASAFPAPGGDAPEEGSNTNTTSSSNTGNNAGTNAGTNA. Low complexity predominate over residues 231–270; the sequence is GAASAFPAPGGDAPEEGSNTNTTSSSNTGNNAGTNAGTNA. In terms of domain architecture, UBA spans 327 to 371; the sequence is PPEERYEHQLRQLNDMGFFDFDRNVAALRRSGGSVQGALDSLLNG.

Its subcellular location is the nucleus. Involved, with RAD23 in spindle pole body duplication. Involved in the ubiquitin-proteasome proteolytic pathway. The chain is Ubiquitin domain-containing protein DSK2 (DSK2) from Saccharomyces cerevisiae (strain ATCC 204508 / S288c) (Baker's yeast).